Consider the following 156-residue polypeptide: Ribosomal RNA large subunit methyltransferase H (156 aa).

Residues leucine 73, glycine 104, and 123 to 128 each bind S-adenosyl-L-methionine; that span reads LSALTM.

The protein belongs to the RNA methyltransferase RlmH family. Homodimer.

It is found in the cytoplasm. The catalysed reaction is pseudouridine(1915) in 23S rRNA + S-adenosyl-L-methionine = N(3)-methylpseudouridine(1915) in 23S rRNA + S-adenosyl-L-homocysteine + H(+). Functionally, specifically methylates the pseudouridine at position 1915 (m3Psi1915) in 23S rRNA. In Tolumonas auensis (strain DSM 9187 / NBRC 110442 / TA 4), this protein is Ribosomal RNA large subunit methyltransferase H.